Reading from the N-terminus, the 332-residue chain is L-lactate dehydrogenase C chain (332 aa).

Serine 2 carries the post-translational modification Blocked amino end (Ser). NAD(+) contacts are provided by residues glycine 29–lysine 57 and arginine 99. 3 residues coordinate substrate: arginine 106, asparagine 138, and arginine 169. Asparagine 138 serves as a coordination point for NAD(+). Histidine 193 functions as the Proton acceptor in the catalytic mechanism. Residue threonine 248 coordinates substrate.

It belongs to the LDH/MDH superfamily. LDH family. In terms of assembly, homotetramer. Interacts with RABL2/RABL2A; binds preferentially to GTP-bound RABL2. Expressed within the midpiece of sperm tail (at protein level).

The protein localises to the cytoplasm. The catalysed reaction is (S)-lactate + NAD(+) = pyruvate + NADH + H(+). It functions in the pathway fermentation; pyruvate fermentation to lactate; (S)-lactate from pyruvate: step 1/1. Functionally, possible role in sperm motility. The protein is L-lactate dehydrogenase C chain (Ldhc) of Mus musculus (Mouse).